Here is a 587-residue protein sequence, read N- to C-terminus: 2-succinyl-5-enolpyruvyl-6-hydroxy-3-cyclohexene-1-carboxylate synthase (587 aa).

This sequence belongs to the TPP enzyme family. MenD subfamily. In terms of assembly, homodimer. Requires Mg(2+) as cofactor. The cofactor is Mn(2+). Thiamine diphosphate serves as cofactor.

The catalysed reaction is isochorismate + 2-oxoglutarate + H(+) = 5-enolpyruvoyl-6-hydroxy-2-succinyl-cyclohex-3-ene-1-carboxylate + CO2. The protein operates within quinol/quinone metabolism; 1,4-dihydroxy-2-naphthoate biosynthesis; 1,4-dihydroxy-2-naphthoate from chorismate: step 2/7. It participates in quinol/quinone metabolism; menaquinone biosynthesis. Catalyzes the thiamine diphosphate-dependent decarboxylation of 2-oxoglutarate and the subsequent addition of the resulting succinic semialdehyde-thiamine pyrophosphate anion to isochorismate to yield 2-succinyl-5-enolpyruvyl-6-hydroxy-3-cyclohexene-1-carboxylate (SEPHCHC). The chain is 2-succinyl-5-enolpyruvyl-6-hydroxy-3-cyclohexene-1-carboxylate synthase from Chloroflexus aurantiacus (strain ATCC 29366 / DSM 635 / J-10-fl).